Here is a 49-residue protein sequence, read N- to C-terminus: Large ribosomal subunit protein bL33A (49 aa).

Belongs to the bacterial ribosomal protein bL33 family.

The protein is Large ribosomal subunit protein bL33A of Lactobacillus johnsonii (strain CNCM I-12250 / La1 / NCC 533).